The sequence spans 122 residues: Large ribosomal subunit protein uL14 (122 aa).

The protein belongs to the universal ribosomal protein uL14 family. As to quaternary structure, part of the 50S ribosomal subunit. Forms a cluster with proteins L3 and L19. In the 70S ribosome, L14 and L19 interact and together make contacts with the 16S rRNA in bridges B5 and B8.

Binds to 23S rRNA. Forms part of two intersubunit bridges in the 70S ribosome. This chain is Large ribosomal subunit protein uL14, found in Phenylobacterium zucineum (strain HLK1).